The chain runs to 878 residues: MSLSLKTRRFGRPVRPQLVLLLLFALCLLSVFISAYYLYGWKRGLEPSGSEAQSPDCDEPKISPSRLLPVKPLKPVDSSRTDPLVLVFVESLYSQLGQEIVAILESSRFKYRTEIAPGKGDMPTLTDKDRGRFALIVYENILKYVNLDAWNRELLDKYCVEYGVGIIGFFKANENSLLSAQLKGFPLYLHSNLGLKDCSINPKSPLLYITRPNQVEKGDLPGEDWTVFQSNHSTYEPVLLAKTKSAESIPHLSVDAALHTTVVQDLGLHDGIQRVLFGNNLNFWLHKLVFVDAVSFLTGKRLSLPLNRYVLVDIDDIFVGKEGTRMKVEDVKALYDTQMELRTHIPNFTFNLGFSGKFFHTGTDAEDEGDDLLLSYVKQFWWFPHMWSHMQPHLFHNQSVLAEQMALNRKFAVDHGIPTDMGYAVAPHHSGVYPVHVQLYEAWKQIWGIKVTSTEEYPHLKPARYRRGFVHNGIMILPRQTCGLFTHTIFYNEYPGGPVELDKIINGGELFLTVLLNPISIFMTHLSNYGNDRLGLYTFKLLVQFLNTWTNLKLETLPPVQLAHKYFQIFPEEKDPLWQDPCEDKRHKDIWSKEKTCDRFPKLLIIGPQKTGTTALYLFLGMHSDLSSNYPSSETFEEIQFYNGQNYHKGIDWYMEFFPIPSNTTSDFYFEKSANYFDSELAPRRVAALLPKAKIITILINPADRAYSWYQHQRAHDDPVAIKYTFQEVIKAGPEAPQRLRALQNRCLVPGWYSTHIERWMNHFHANQILVLDGKLLRTEPANVMETVQKFLGVTNAMDYHKTLAFDPKKGFWCQLLDGGKTKCLGKSKGRKYPDMDSDSRSFLMDYYRDHNIELSKLLYKMGQTLPTWLREELQNTR.

The Cytoplasmic segment spans residues 1-17; that stretch reads MSLSLKTRRFGRPVRPQ. Residues 1 to 169 form a sufficient for localization to Golgi membrane region; sequence MSLSLKTRRF…VEYGVGIIGF (169 aa). A helical; Signal-anchor for type II membrane protein transmembrane segment spans residues 18–38; that stretch reads LVLLLLFALCLLSVFISAYYL. The Lumenal portion of the chain corresponds to 39–878; sequence YGWKRGLEPS…WLREELQNTR (840 aa). A heparan sulfate N-deacetylase 1 region spans residues 40–594; sequence GWKRGLEPSG…KRHKDIWSKE (555 aa). Asparagine 231, asparagine 347, and asparagine 397 each carry an N-linked (GlcNAc...) asparagine glycan. Residues 595 to 878 are heparan sulfate N-sulfotransferase 1; sequence KTCDRFPKLL…WLREELQNTR (284 aa). Lysine 610 acts as the For sulfotransferase activity in catalysis. Residue 610–614 coordinates adenosine 3',5'-bisphosphate; sequence KTGTT. An N-linked (GlcNAc...) asparagine glycan is attached at asparagine 663. Serine 708 and tryptophan 813 together coordinate adenosine 3',5'-bisphosphate. A disulfide bridge connects residues cysteine 814 and cysteine 824. 829–833 is a binding site for adenosine 3',5'-bisphosphate; that stretch reads KGRKY.

It belongs to the sulfotransferase 1 family. NDST subfamily. In terms of assembly, monomer.

It localises to the golgi apparatus membrane. It is found in the golgi apparatus. The protein resides in the trans-Golgi network membrane. The catalysed reaction is alpha-D-glucosaminyl-[heparan sulfate](n) + 3'-phosphoadenylyl sulfate = N-sulfo-alpha-D-glucosaminyl-[heparan sulfate](n) + adenosine 3',5'-bisphosphate + 2 H(+). The protein operates within glycan metabolism; heparan sulfate biosynthesis. It functions in the pathway glycan metabolism; heparin biosynthesis. In terms of biological role, essential bifunctional enzyme that catalyzes both the N-deacetylation and the N-sulfation of glucosamine (GlcNAc) of the glycosaminoglycan in heparan sulfate. Modifies the GlcNAc-GlcA disaccharide repeating sugar backbone to make N-sulfated heparosan, a prerequisite substrate for later modifications in heparin biosynthesis. Plays a role in determining the extent and pattern of sulfation of heparan sulfate. In Xenopus laevis (African clawed frog), this protein is Bifunctional heparan sulfate N-deacetylase/N-sulfotransferase 1 (ndst1).